Consider the following 364-residue polypeptide: Envelope glycoprotein US27 (364 aa).

Over 1–36 (MTTSTTTTTNIMLQVSNVTNHTLNSTEIYQLFEYTR) the chain is Virion surface. Residues asparagine 17, asparagine 20, and asparagine 24 are each glycosylated (N-linked (GlcNAc...) asparagine; by host). A helical membrane pass occupies residues 37–57 (FGVWLMCIVGTFLNMLVITTI). Residues 58 to 69 (LYYRRKKKSPSD) lie on the Intravirion side of the membrane. Residues 70-90 (TYICNLAVADLLIVVGLPFFL) form a helical membrane-spanning segment. The Virion surface portion of the chain corresponds to 91-103 (EYAKHHPKLSREV). Residues 104–124 (VCSGLNACFYICLFAGVCFLI) traverse the membrane as a helical segment. Topologically, residues 125 to 150 (NLSMDRYCVIVWGVELNRVRNNKRAT) are intravirion. Residues 151–171 (CWVVIFWILAALMGMPHYLMY) form a helical membrane-spanning segment. Over 172–188 (SHTNNECVGEFANETSG) the chain is Virion surface. Residues 189 to 209 (WFPVFLNTKVNICGYLAPIVL) form a helical membrane-spanning segment. At 210-234 (MAYTYNRMVRFIINYVGKWHMQTLH) the chain is on the intravirion side. The helical transmembrane segment at 235–255 (VLLVVVVSFASFWFPFNLALF) threads the bilayer. Residues 256 to 279 (LESIRLLSGTQNETLQTVITFCLY) lie on the Virion surface side of the membrane. The helical transmembrane segment at 280-300 (VGQFLAYVRACLNPGIYILVG) threads the bilayer. Residues 301–364 (TQMRKDMWTT…MESGEEEFLL (64 aa)) are Intravirion-facing. The segment at 344-364 (KRTHYDRKHAPMESGEEEFLL) is disordered.

This sequence belongs to the G-protein coupled receptor 1 family. As to quaternary structure, heterodimerizes with US28.

It is found in the virion. The protein localises to the host cell membrane. In terms of biological role, plays an important role in spread of HCMV via the extracellular route. As a G-protein-coupled receptor (vGPCR), may activate signaling pathways important for virion assembly or egress processes. In Homo sapiens (Human), this protein is Envelope glycoprotein US27 (US27).